Consider the following 222-residue polypeptide: Peptide methionine sulfoxide reductase MsrA (222 aa).

Cys-55 is an active-site residue.

This sequence belongs to the MsrA Met sulfoxide reductase family.

It carries out the reaction L-methionyl-[protein] + [thioredoxin]-disulfide + H2O = L-methionyl-(S)-S-oxide-[protein] + [thioredoxin]-dithiol. The catalysed reaction is [thioredoxin]-disulfide + L-methionine + H2O = L-methionine (S)-S-oxide + [thioredoxin]-dithiol. Its function is as follows. Has an important function as a repair enzyme for proteins that have been inactivated by oxidation. Catalyzes the reversible oxidation-reduction of methionine sulfoxide in proteins to methionine. This chain is Peptide methionine sulfoxide reductase MsrA, found in Streptomyces griseus subsp. griseus (strain JCM 4626 / CBS 651.72 / NBRC 13350 / KCC S-0626 / ISP 5235).